The chain runs to 445 residues: Phosphoglucosamine mutase (445 aa).

Serine 102 (phosphoserine intermediate) is an active-site residue. Residues serine 102, aspartate 241, aspartate 243, and aspartate 245 each coordinate Mg(2+). Serine 102 bears the Phosphoserine mark.

The protein belongs to the phosphohexose mutase family. Mg(2+) serves as cofactor. Post-translationally, activated by phosphorylation.

The enzyme catalyses alpha-D-glucosamine 1-phosphate = D-glucosamine 6-phosphate. Catalyzes the conversion of glucosamine-6-phosphate to glucosamine-1-phosphate. This Shewanella denitrificans (strain OS217 / ATCC BAA-1090 / DSM 15013) protein is Phosphoglucosamine mutase.